The chain runs to 78 residues: ATP synthase subunit c (78 aa).

A run of 2 helical transmembrane segments spans residues Phe-11–Val-31 and Leu-53–Leu-73.

Belongs to the ATPase C chain family. In terms of assembly, F-type ATPases have 2 components, F(1) - the catalytic core - and F(0) - the membrane proton channel. F(1) has five subunits: alpha(3), beta(3), gamma(1), delta(1), epsilon(1). F(0) has four main subunits: a(1), b(1), b'(1) and c(10-14). The alpha and beta chains form an alternating ring which encloses part of the gamma chain. F(1) is attached to F(0) by a central stalk formed by the gamma and epsilon chains, while a peripheral stalk is formed by the delta, b and b' chains.

The protein localises to the cell inner membrane. F(1)F(0) ATP synthase produces ATP from ADP in the presence of a proton or sodium gradient. F-type ATPases consist of two structural domains, F(1) containing the extramembraneous catalytic core and F(0) containing the membrane proton channel, linked together by a central stalk and a peripheral stalk. During catalysis, ATP synthesis in the catalytic domain of F(1) is coupled via a rotary mechanism of the central stalk subunits to proton translocation. Functionally, key component of the F(0) channel; it plays a direct role in translocation across the membrane. A homomeric c-ring of between 10-14 subunits forms the central stalk rotor element with the F(1) delta and epsilon subunits. The sequence is that of ATP synthase subunit c from Cereibacter sphaeroides (strain ATCC 17025 / ATH 2.4.3) (Rhodobacter sphaeroides).